Here is a 178-residue protein sequence, read N- to C-terminus: Large ribosomal subunit protein bL25 (178 aa).

It belongs to the bacterial ribosomal protein bL25 family. CTC subfamily. As to quaternary structure, part of the 50S ribosomal subunit; part of the 5S rRNA/L5/L18/L25 subcomplex. Contacts the 5S rRNA. Binds to the 5S rRNA independently of L5 and L18.

Its function is as follows. This is one of the proteins that binds to the 5S RNA in the ribosome where it forms part of the central protuberance. The protein is Large ribosomal subunit protein bL25 of Helicobacter hepaticus (strain ATCC 51449 / 3B1).